The primary structure comprises 252 residues: 3-dehydroquinate dehydratase (252 aa).

Residues Ser21, 46–48, and Arg82 contribute to the 3-dehydroquinate site; that span reads EWR. Catalysis depends on His143, which acts as the Proton donor/acceptor. Lys170 acts as the Schiff-base intermediate with substrate in catalysis. Positions 213, 232, and 236 each coordinate 3-dehydroquinate.

This sequence belongs to the type-I 3-dehydroquinase family. Homodimer.

It catalyses the reaction 3-dehydroquinate = 3-dehydroshikimate + H2O. It participates in metabolic intermediate biosynthesis; chorismate biosynthesis; chorismate from D-erythrose 4-phosphate and phosphoenolpyruvate: step 3/7. Involved in the third step of the chorismate pathway, which leads to the biosynthesis of aromatic amino acids. Catalyzes the cis-dehydration of 3-dehydroquinate (DHQ) and introduces the first double bond of the aromatic ring to yield 3-dehydroshikimate. The protein is 3-dehydroquinate dehydratase of Escherichia coli (strain K12 / MC4100 / BW2952).